Consider the following 414-residue polypeptide: Putative polyketide beta-ketoacyl synthase 2 (414 aa).

Residues 4 to 407 enclose the Ketosynthase family 3 (KS3) domain; that stretch reads PRRAVVTGLG…GNNSALVLRR (404 aa).

It belongs to the thiolase-like superfamily. Beta-ketoacyl-ACP synthases family.

Functionally, involved in developmentally regulated synthesis of a compound biosynthetically related to polyketide antibiotics which is essential for spore color in Streptomyces halstedii. This is Putative polyketide beta-ketoacyl synthase 2 (sch2) from Streptomyces halstedii.